The following is a 217-amino-acid chain: Octanoyltransferase (217 aa).

A BPL/LPL catalytic domain is found at 30–209; the sequence is GNRPPTLLLL…AFAEVFGLRP (180 aa). Residues 75 to 82, 139 to 141, and 152 to 154 contribute to the substrate site; these read RGGDVTYH, AIG, and GFA. Catalysis depends on Cys170, which acts as the Acyl-thioester intermediate.

This sequence belongs to the LipB family.

The protein localises to the cytoplasm. The catalysed reaction is octanoyl-[ACP] + L-lysyl-[protein] = N(6)-octanoyl-L-lysyl-[protein] + holo-[ACP] + H(+). The protein operates within protein modification; protein lipoylation via endogenous pathway; protein N(6)-(lipoyl)lysine from octanoyl-[acyl-carrier-protein]: step 1/2. Catalyzes the transfer of endogenously produced octanoic acid from octanoyl-acyl-carrier-protein onto the lipoyl domains of lipoate-dependent enzymes. Lipoyl-ACP can also act as a substrate although octanoyl-ACP is likely to be the physiological substrate. In Thermus thermophilus (strain ATCC 27634 / DSM 579 / HB8), this protein is Octanoyltransferase.